Here is a 213-residue protein sequence, read N- to C-terminus: Kynurenine formamidase (213 aa).

Residue Trp-18 coordinates substrate. Positions 48, 52, and 54 each coordinate Zn(2+). The Proton donor/acceptor role is filled by His-58. Zn(2+) is bound by residues His-160 and Glu-172.

The protein belongs to the Cyclase 1 superfamily. KynB family. In terms of assembly, homodimer. Zn(2+) is required as a cofactor.

The enzyme catalyses N-formyl-L-kynurenine + H2O = L-kynurenine + formate + H(+). The protein operates within amino-acid degradation; L-tryptophan degradation via kynurenine pathway; L-kynurenine from L-tryptophan: step 2/2. In terms of biological role, catalyzes the hydrolysis of N-formyl-L-kynurenine to L-kynurenine, the second step in the kynurenine pathway of tryptophan degradation. The sequence is that of Kynurenine formamidase from Burkholderia pseudomallei (strain 1106a).